The chain runs to 394 residues: Cell adhesion molecule 3 (394 aa).

An N-terminal signal peptide occupies residues 1–17; it reads MHHPVILLLCLSSLAGA. Residues 18–326 are Extracellular-facing; that stretch reads ANLPPEDLSQ…PIPSTSSIDH (309 aa). The Ig-like V-type domain maps to 22 to 120; that stretch reads PEDLSQPVTA…PVRTAKAVVT (99 aa). 2 disulfide bridges follow: Cys45–Cys105 and Cys147–Cys204. 2 consecutive Ig-like C2-type domains span residues 128-223 and 228-306; these read PQVS…HKIQ and PTAK…TFIT. Positions 217–240 are disordered; sequence SSSHKIQVQYKPTAKIESRPSMPR. Basic and acidic residues predominate over residues 230-240; it reads AKIESRPSMPR. Cys249 and Cys295 are oxidised to a cystine. A helical membrane pass occupies residues 327 to 347; sequence AVIGGVVAVIAFLLFCLLIVL. The Cytoplasmic segment spans residues 348 to 394; it reads GRYLIRHKGTYLTHEAKGSDDAPDADTAIINAEGGQGGSDDKKEYFI. A disordered region spans residues 363 to 394; sequence AKGSDDAPDADTAIINAEGGQGGSDDKKEYFI.

Belongs to the nectin family.

It is found in the cell membrane. Its subcellular location is the cell junction. Its function is as follows. May be involved in cell-cell adhesion. The polypeptide is Cell adhesion molecule 3 (cadm3) (Xenopus laevis (African clawed frog)).